Reading from the N-terminus, the 201-residue chain is Regulator of G-protein signaling 1 (201 aa).

Residues 75 to 191 (SLEKLLISED…LKSEIFLRLA (117 aa)) form the RGS domain.

It is found in the cell membrane. The protein resides in the cytoplasm. The protein localises to the cytosol. Its function is as follows. Regulates G protein-coupled receptor signaling cascades, including signaling downstream of the N-formylpeptide chemoattractant receptors and leukotriene receptors. Inhibits B cell chemotaxis. Inhibits signal transduction by increasing the GTPase activity of G protein alpha subunits, thereby driving them into their inactive GDP-bound form. The chain is Regulator of G-protein signaling 1 (rgs1) from Xenopus tropicalis (Western clawed frog).